Reading from the N-terminus, the 254-residue chain is MAEEVWMGTWRPHRPRGPIMALYSSPGPKYLIPPTTGFVKHTPTKLRAPAYSFRGAPMLLAENCSPGPRYSVNPKILKTGKDLGPAYSILGRYHTKTLLTPGPGDYFPEKSTKYVFDSAPSHSISARTKTFRVDSTPGPAAYMLPVVMGPHTVGKVSQPSFSIKGRSKLGSFSDDLHKTPGPAAYRQTEVQVTKFKAPQYTMAARVEPPGDKTLKPGPGAHSPEKVTLNKPCAPTVTFGIKHSDYMTPLVVDVE.

STPGR repeat units follow at residues 180 to 205 (PGPA…MAAR) and 216 to 241 (PGPG…FGIK). The tract at residues 207–228 (EPPGDKTLKPGPGAHSPEKVTL) is disordered.

The protein belongs to the CIMAP family. As to quaternary structure, microtubule inner protein component of sperm flagellar doublet microtubules. In terms of tissue distribution, testis-specific (at protein level). Expression restricted to the germ cell fraction, absent in somatic cell fractions such as Sertoli and Leydig cells. Expression detected in the third week postpartum (23 days) after haploid germ cells developed, expression increased with age. Expressed in the tails of elongated spermatids sticking out toward the tubular lumen, and in cytoplasmic droplets still attached to the spermatid tail membrane. Expressed in the tails of mature sperm, from the connecting piece proximal to the head, along the middle and principal pieces, down to the distal end piece.

Its subcellular location is the cytoplasm. It localises to the cytoskeleton. The protein localises to the flagellum axoneme. Its function is as follows. Outer dense fibers are filamentous structures located on the outside of the axoneme in the midpiece and principal piece of the mammalian sperm tail. May help to maintain the passive elastic structures and elastic recoil of the sperm tail. The chain is Ciliary microtubule associated protein 1A (Cimap1a) from Mus musculus (Mouse).